We begin with the raw amino-acid sequence, 367 residues long: Chorismate synthase (367 aa).

Residues Arg48 and Arg54 each coordinate NADP(+). Residues 125 to 127 (RSS), 238 to 239 (NA), Gly278, 293 to 297 (KPTSS), and Arg319 each bind FMN.

Belongs to the chorismate synthase family. As to quaternary structure, homotetramer. FMNH2 is required as a cofactor.

It catalyses the reaction 5-O-(1-carboxyvinyl)-3-phosphoshikimate = chorismate + phosphate. It functions in the pathway metabolic intermediate biosynthesis; chorismate biosynthesis; chorismate from D-erythrose 4-phosphate and phosphoenolpyruvate: step 7/7. Catalyzes the anti-1,4-elimination of the C-3 phosphate and the C-6 proR hydrogen from 5-enolpyruvylshikimate-3-phosphate (EPSP) to yield chorismate, which is the branch point compound that serves as the starting substrate for the three terminal pathways of aromatic amino acid biosynthesis. This reaction introduces a second double bond into the aromatic ring system. The chain is Chorismate synthase from Stenotrophomonas maltophilia (strain R551-3).